The primary structure comprises 168 residues: Peptide deformylase (168 aa).

C92 and H134 together coordinate Fe cation. The active site involves E135. Residue H138 participates in Fe cation binding.

The protein belongs to the polypeptide deformylase family. Fe(2+) is required as a cofactor.

The catalysed reaction is N-terminal N-formyl-L-methionyl-[peptide] + H2O = N-terminal L-methionyl-[peptide] + formate. In terms of biological role, removes the formyl group from the N-terminal Met of newly synthesized proteins. Requires at least a dipeptide for an efficient rate of reaction. N-terminal L-methionine is a prerequisite for activity but the enzyme has broad specificity at other positions. This Teredinibacter turnerae (strain ATCC 39867 / T7901) protein is Peptide deformylase.